A 497-amino-acid chain; its full sequence is Cytochrome P450 3A18 (497 aa).

Position 442 (C442) interacts with heme.

It belongs to the cytochrome P450 family. The cofactor is heme.

The protein resides in the endoplasmic reticulum membrane. It is found in the microsome membrane. It catalyses the reaction an organic molecule + reduced [NADPH--hemoprotein reductase] + O2 = an alcohol + oxidized [NADPH--hemoprotein reductase] + H2O + H(+). Catalyzes 16-beta- and 6-alpha-hydroxylations of testosterone. The protein is Cytochrome P450 3A18 (Cyp3a18) of Rattus norvegicus (Rat).